The primary structure comprises 56 residues: Large ribosomal subunit protein bL32 (56 aa).

The interval 1 to 21 (MGVPQRRQSHARKNKRRSEWR) is disordered. Residues 7 to 19 (RQSHARKNKRRSE) are compositionally biased toward basic residues.

This sequence belongs to the bacterial ribosomal protein bL32 family.

The polypeptide is Large ribosomal subunit protein bL32 (Syntrophomonas wolfei subsp. wolfei (strain DSM 2245B / Goettingen)).